Here is a 228-residue protein sequence, read N- to C-terminus: Prepilin leader peptidase/N-methyltransferase (228 aa).

6 helical membrane-spanning segments follow: residues 18–38 (LWGS…NVVI), 95–115 (RYPL…YLMA), 116–136 (PGVP…LAAI), 147–167 (LTLP…YVPL), 168–188 (AEAV…YWVF), and 204–224 (LLAA…LLLA).

Belongs to the peptidase A24 family.

The protein localises to the cell inner membrane. It carries out the reaction Typically cleaves a -Gly-|-Phe- bond to release an N-terminal, basic peptide of 5-8 residues from type IV prepilin, and then N-methylates the new N-terminal amino group, the methyl donor being S-adenosyl-L-methionine.. Functionally, plays an essential role in type IV pili and type II pseudopili formation by proteolytically removing the leader sequence from substrate proteins and subsequently monomethylating the alpha-amino group of the newly exposed N-terminal phenylalanine. In Klebsiella pneumoniae, this protein is Prepilin leader peptidase/N-methyltransferase (pulO).